A 235-amino-acid polypeptide reads, in one-letter code: Large ribosomal subunit protein uL1 (235 aa).

It belongs to the universal ribosomal protein uL1 family. As to quaternary structure, part of the 50S ribosomal subunit.

Functionally, binds directly to 23S rRNA. The L1 stalk is quite mobile in the ribosome, and is involved in E site tRNA release. In terms of biological role, protein L1 is also a translational repressor protein, it controls the translation of the L11 operon by binding to its mRNA. This chain is Large ribosomal subunit protein uL1, found in Lawsonia intracellularis (strain PHE/MN1-00).